The chain runs to 241 residues: Ribosomal RNA large subunit methyltransferase E (241 aa).

Residues Gly-88, Trp-90, Asp-111, Asp-127, and Asp-151 each contribute to the S-adenosyl-L-methionine site. The active-site Proton acceptor is the Lys-191.

Belongs to the class I-like SAM-binding methyltransferase superfamily. RNA methyltransferase RlmE family.

It localises to the cytoplasm. The catalysed reaction is uridine(2552) in 23S rRNA + S-adenosyl-L-methionine = 2'-O-methyluridine(2552) in 23S rRNA + S-adenosyl-L-homocysteine + H(+). Specifically methylates the uridine in position 2552 of 23S rRNA at the 2'-O position of the ribose in the fully assembled 50S ribosomal subunit. This Bartonella quintana (strain Toulouse) (Rochalimaea quintana) protein is Ribosomal RNA large subunit methyltransferase E.